The primary structure comprises 201 residues: Recombination protein RecR (201 aa).

The C4-type zinc finger occupies 60 to 75 (CATCGNFDTVQPCAVC). Residues 83 to 178 (GIICVVEDVP…DVTRLAHGVP (96 aa)) form the Toprim domain.

Belongs to the RecR family.

May play a role in DNA repair. It seems to be involved in an RecBC-independent recombinational process of DNA repair. It may act with RecF and RecO. This is Recombination protein RecR from Hyphomonas neptunium (strain ATCC 15444).